Consider the following 159-residue polypeptide: NADH-quinone oxidoreductase subunit I (159 aa).

4Fe-4S ferredoxin-type domains follow at residues 51–80 (RRYE…IESD) and 90–119 (TRYD…EGPN). 8 residues coordinate [4Fe-4S] cluster: Cys60, Cys63, Cys66, Cys70, Cys99, Cys102, Cys105, and Cys109.

The protein belongs to the complex I 23 kDa subunit family. NDH-1 is composed of 14 different subunits. Subunits NuoA, H, J, K, L, M, N constitute the membrane sector of the complex. [4Fe-4S] cluster serves as cofactor.

The protein resides in the cell inner membrane. The catalysed reaction is a quinone + NADH + 5 H(+)(in) = a quinol + NAD(+) + 4 H(+)(out). In terms of biological role, NDH-1 shuttles electrons from NADH, via FMN and iron-sulfur (Fe-S) centers, to quinones in the respiratory chain. The immediate electron acceptor for the enzyme in this species is believed to be ubiquinone. Couples the redox reaction to proton translocation (for every two electrons transferred, four hydrogen ions are translocated across the cytoplasmic membrane), and thus conserves the redox energy in a proton gradient. This is NADH-quinone oxidoreductase subunit I from Rickettsia typhi (strain ATCC VR-144 / Wilmington).